We begin with the raw amino-acid sequence, 351 residues long: Protein arginine N-methyltransferase 1-B (351 aa).

The SAM-dependent MTase PRMT-type domain occupies 30 to 331; sequence KDYYFDSYAH…KNNRDLDFTV (302 aa). S-adenosyl-L-methionine is bound by residues His43, Arg52, Gly76, Glu98, and Glu127. Active-site residues include Glu142 and Glu151.

It belongs to the class I-like SAM-binding methyltransferase superfamily. Protein arginine N-methyltransferase family. As to quaternary structure, homodimer. Homooctamer; individual homodimers associates to form a homooctamer and homooligomerization is required for proper localization to the cell membrane. Individual homodimers can associate to form a homohexamer. Component of a complex with lsm14a/rap55a. Interacts with cirbp. As to expression, from the onset of gastrulation, expressed in dorsal mesoderm, and in dorsal and ventral ectoderm. At the neurula and tail bud stages, expression is restricted to the neuroectoderm, with highest expression in the anterior neural plate.

The protein localises to the nucleus. It localises to the nucleoplasm. Its subcellular location is the cytoplasm. It is found in the cytosol. It carries out the reaction L-arginyl-[protein] + 2 S-adenosyl-L-methionine = N(omega),N(omega)-dimethyl-L-arginyl-[protein] + 2 S-adenosyl-L-homocysteine + 2 H(+). The enzyme catalyses L-arginyl-[protein] + S-adenosyl-L-methionine = N(omega)-methyl-L-arginyl-[protein] + S-adenosyl-L-homocysteine + H(+). It catalyses the reaction N(omega)-methyl-L-arginyl-[protein] + S-adenosyl-L-methionine = N(omega),N(omega)-dimethyl-L-arginyl-[protein] + S-adenosyl-L-homocysteine + H(+). Functionally, arginine methyltransferase that methylates (mono and asymmetric dimethylation) the guanidino nitrogens of arginyl residues present in target proteins. Constitutes the main enzyme that mediates monomethylation and asymmetric dimethylation of histone H4 'Arg-4' (H4R3me1 and H4R3me2a, respectively), a specific tag for epigenetic transcriptional activation. Methylates ilf3 to regulate its DNA-binding activity. Required for neural induction, playing a key role in the control of epidermal versus neural cell fate choice. The sequence is that of Protein arginine N-methyltransferase 1-B (prmt1-b) from Xenopus laevis (African clawed frog).